Reading from the N-terminus, the 555-residue chain is Glutamine--tRNA ligase (555 aa).

The 'HIGH' region signature appears at 35–45 (PEPNGYLHIGH). ATP-binding positions include 36–38 (EPN) and 42–48 (HIGHAKS). 2 residues coordinate L-glutamine: D68 and Y213. Residues T232 and 262-263 (RL) contribute to the ATP site. A 'KMSKS' region motif is present at residues 269-273 (ITSKR).

This sequence belongs to the class-I aminoacyl-tRNA synthetase family. As to quaternary structure, monomer.

Its subcellular location is the cytoplasm. The catalysed reaction is tRNA(Gln) + L-glutamine + ATP = L-glutaminyl-tRNA(Gln) + AMP + diphosphate. This is Glutamine--tRNA ligase from Stutzerimonas stutzeri (strain A1501) (Pseudomonas stutzeri).